We begin with the raw amino-acid sequence, 305 residues long: N-acetylmuramic acid 6-phosphate etherase (305 aa).

Residues 61-224 (ISDALAKGGR…STGAMVKLGK (164 aa)) form the SIS domain. Glu89 functions as the Proton donor in the catalytic mechanism. Glu120 is an active-site residue.

The protein belongs to the GCKR-like family. MurNAc-6-P etherase subfamily. As to quaternary structure, homodimer.

The enzyme catalyses N-acetyl-D-muramate 6-phosphate + H2O = N-acetyl-D-glucosamine 6-phosphate + (R)-lactate. Its pathway is amino-sugar metabolism; N-acetylmuramate degradation. Functionally, specifically catalyzes the cleavage of the D-lactyl ether substituent of MurNAc 6-phosphate, producing GlcNAc 6-phosphate and D-lactate. The protein is N-acetylmuramic acid 6-phosphate etherase of Synechocystis sp. (strain ATCC 27184 / PCC 6803 / Kazusa).